The primary structure comprises 358 residues: Uroporphyrinogen decarboxylase (358 aa).

Residues 29–33 (RQAGR), F48, D79, Y155, S210, and H330 each bind substrate.

Belongs to the uroporphyrinogen decarboxylase family. As to quaternary structure, homodimer.

Its subcellular location is the cytoplasm. The catalysed reaction is uroporphyrinogen III + 4 H(+) = coproporphyrinogen III + 4 CO2. The protein operates within porphyrin-containing compound metabolism; protoporphyrin-IX biosynthesis; coproporphyrinogen-III from 5-aminolevulinate: step 4/4. Catalyzes the decarboxylation of four acetate groups of uroporphyrinogen-III to yield coproporphyrinogen-III. This chain is Uroporphyrinogen decarboxylase, found in Bordetella pertussis (strain Tohama I / ATCC BAA-589 / NCTC 13251).